Here is a 406-residue protein sequence, read N- to C-terminus: 2,3-bisphosphoglycerate-independent phosphoglycerate mutase (406 aa).

It belongs to the BPG-independent phosphoglycerate mutase family. A-PGAM subfamily.

It catalyses the reaction (2R)-2-phosphoglycerate = (2R)-3-phosphoglycerate. Its pathway is carbohydrate degradation; glycolysis; pyruvate from D-glyceraldehyde 3-phosphate: step 3/5. Functionally, catalyzes the interconversion of 2-phosphoglycerate and 3-phosphoglycerate. This Methanococcus maripaludis (strain C7 / ATCC BAA-1331) protein is 2,3-bisphosphoglycerate-independent phosphoglycerate mutase.